We begin with the raw amino-acid sequence, 705 residues long: Polyribonucleotide nucleotidyltransferase (705 aa).

2 residues coordinate Mg(2+): aspartate 486 and aspartate 492. Positions 553 to 612 (PRIHTIRINPDKIKDVIGKGGSVIRALTEETGTTIEIEDDGTVKIAATDGEKAKFAIRRI) constitute a KH domain. Residues 622–690 (GRIYQGKVTR…RQGRVRLSIK (69 aa)) enclose the S1 motif domain.

The protein belongs to the polyribonucleotide nucleotidyltransferase family. As to quaternary structure, component of the RNA degradosome, which is a multiprotein complex involved in RNA processing and mRNA degradation. Mg(2+) is required as a cofactor.

The protein resides in the cytoplasm. The catalysed reaction is RNA(n+1) + phosphate = RNA(n) + a ribonucleoside 5'-diphosphate. Involved in mRNA degradation. Catalyzes the phosphorolysis of single-stranded polyribonucleotides processively in the 3'- to 5'-direction. The protein is Polyribonucleotide nucleotidyltransferase of Serratia proteamaculans (strain 568).